A 319-amino-acid chain; its full sequence is Tetrahydromethanopterin S-methyltransferase subunit H (319 aa).

The protein belongs to the MtrH family. As to quaternary structure, the complex is composed of 8 subunits; MtrA, MtrB, MtrC, MtrD, MtrE, MtrF, MtrG and MtrH.

The catalysed reaction is 5-methyl-5,6,7,8-tetrahydromethanopterin + coenzyme M + 2 Na(+)(in) = 5,6,7,8-tetrahydromethanopterin + methyl-coenzyme M + 2 Na(+)(out). It participates in one-carbon metabolism; methanogenesis from CO(2); methyl-coenzyme M from 5,10-methylene-5,6,7,8-tetrahydromethanopterin: step 2/2. Part of a complex that catalyzes the formation of methyl-coenzyme M and tetrahydromethanopterin from coenzyme M and methyl-tetrahydromethanopterin. This is an energy-conserving, sodium-ion translocating step. MtrH catalyzes the transfer of the methyl group from methyl-tetrahydromethanopterin to the corrinoid prosthetic group of MtrA. This Methanococcus aeolicus (strain ATCC BAA-1280 / DSM 17508 / OCM 812 / Nankai-3) protein is Tetrahydromethanopterin S-methyltransferase subunit H.